The chain runs to 634 residues: MFEVKLKDGSAKEFDGEISLLDVCKSISEGLARDCVGAVVDGKIMGLMETIDSDCEVQFVKFDDDEGKQVFWHTSSHLMAYAIQRLYPGTKFAIGPSIDSGFYYDLDTDHKFVPEDLEKIEAEMKKIVKENPKLVRVEISRKEALERFKNEGQDYKVDLIENFDEDATITLYEMGDFVDLCRGPHLLDVKNIKAFKLLSIAGAYWRGDENNKMLQRIYGISFPKKKLLDEYLDRMEEAKKRDHRKIGKEMGLFSIQEEGPGFPFFHPNGMVVLNELEKFLKEQLLERGYGQIKTPLILNEHLWHQSGHWDHYKENMYFTKIDGEDYAIKPMNCPGSILVYKDELHSYRELPIKVAELGQVHRHELSGALHGLFRVRTFVQDDAHVFCLPEQIEEEVSKTIDFCDYIYSKFGFKYEVELSTRPEDSMGSDEDWDLAISSLKNALEHKGLPYKINEGDGAFYGPKIDFHLEDAIGRTWQCGTIQLDFQMPERFDMTYIASDGSKKRPAMIHRAILGSEERFMGILIEHYAGKFPLWLSPVQVEILPISDKFNDYAYELQQKMKARGLRVKVDDRSEKIGLKIRESQLKKVNYSLIIGQNEIDNNEVSVRKRDIGDVGSKNTDEFINELVDEYQNRK.

The region spanning 1 to 61 (MFEVKLKDGS…DSDCEVQFVK (61 aa)) is the TGS domain. Positions 242–532 (DHRKIGKEMG…LIEHYAGKFP (291 aa)) are catalytic. The Zn(2+) site is built by Cys-333, His-384, and His-509.

It belongs to the class-II aminoacyl-tRNA synthetase family. As to quaternary structure, homodimer. The cofactor is Zn(2+).

It localises to the cytoplasm. The enzyme catalyses tRNA(Thr) + L-threonine + ATP = L-threonyl-tRNA(Thr) + AMP + diphosphate + H(+). Functionally, catalyzes the attachment of threonine to tRNA(Thr) in a two-step reaction: L-threonine is first activated by ATP to form Thr-AMP and then transferred to the acceptor end of tRNA(Thr). Also edits incorrectly charged L-seryl-tRNA(Thr). The chain is Threonine--tRNA ligase from Finegoldia magna (strain ATCC 29328 / DSM 20472 / WAL 2508) (Peptostreptococcus magnus).